Reading from the N-terminus, the 117-residue chain is NADH-ubiquinone oxidoreductase chain 3 (117 aa).

3 helical membrane-spanning segments follow: residues 1 to 21 (MLMLSIMATIIFIITIVVMML), 57 to 77 (FFLIAIIFLIFDVEIALLLPM), and 86 to 106 (LMNWTMTSFFFIFILLIGLYH).

The protein belongs to the complex I subunit 3 family.

It is found in the mitochondrion membrane. The catalysed reaction is a ubiquinone + NADH + 5 H(+)(in) = a ubiquinol + NAD(+) + 4 H(+)(out). Its function is as follows. Core subunit of the mitochondrial membrane respiratory chain NADH dehydrogenase (Complex I) that is believed to belong to the minimal assembly required for catalysis. Complex I functions in the transfer of electrons from NADH to the respiratory chain. The immediate electron acceptor for the enzyme is believed to be ubiquinone. The sequence is that of NADH-ubiquinone oxidoreductase chain 3 (ND3) from Anopheles quadrimaculatus (Common malaria mosquito).